The following is a 505-amino-acid chain: MAQIDFRKKINWHRRYRSPQGVKTEHEILRIFESDRGRIINSPAIRRLQQKTQVFPLERNAAVRTRLTHSMEVQQVGRYIAKEILSRMKELKLLEAYGLDELTGPFESIVEMSCLMHDIGNPPFGHFGEAAINDWFRQRLHPEDAESQPLTDDRCSVAALRLRDGEEPLNELRRKIRQDLCHFEGNAQGIRLVHTLMRMNLTWAQVGGILKYTRPAWWRGETPETHHYLMKKPGYYLSEEAYIARLRKELNLALYSRFPLTWIMEAADDISYCVADLEDAVEKRIFTVEQLYHHLHEAWGQHEKGSLFSLVVENAWEKSRSNSLSRSTEDQFFMYLRVNTLNKLVPYAAQRFIDNLPAIFAGTFNHALLEDASECSDLLKLYKNVAVKHVFSHPDVEQLELQGYRVISGLLEIYRPLLSLSLSDFTELVEKERVKRFPIESRLFHKLSTRHRLAYVEAVSKLPSDSPEFPLWEYYYRCRLLQDYISGMTDLYAWDEYRRLMAVEQ.

An HD domain is found at 66 to 273 (RLTHSMEVQQ…MEAADDISYC (208 aa)).

It belongs to the dGTPase family. Type 1 subfamily. As to quaternary structure, homotetramer. The cofactor is Mg(2+).

It catalyses the reaction dGTP + H2O = 2'-deoxyguanosine + triphosphate + H(+). Functionally, dGTPase preferentially hydrolyzes dGTP over the other canonical NTPs. The protein is Deoxyguanosinetriphosphate triphosphohydrolase of Shigella boydii serotype 4 (strain Sb227).